Reading from the N-terminus, the 112-residue chain is Phosphoribosyl-AMP cyclohydrolase (112 aa).

Mg(2+) is bound at residue Asp-76. Cys-77 is a Zn(2+) binding site. The Mg(2+) site is built by Asp-78 and Asp-80. 2 residues coordinate Zn(2+): Cys-93 and Cys-100.

This sequence belongs to the PRA-CH family. In terms of assembly, homodimer. Mg(2+) serves as cofactor. Requires Zn(2+) as cofactor.

Its subcellular location is the cytoplasm. It carries out the reaction 1-(5-phospho-beta-D-ribosyl)-5'-AMP + H2O = 1-(5-phospho-beta-D-ribosyl)-5-[(5-phospho-beta-D-ribosylamino)methylideneamino]imidazole-4-carboxamide. The protein operates within amino-acid biosynthesis; L-histidine biosynthesis; L-histidine from 5-phospho-alpha-D-ribose 1-diphosphate: step 3/9. Functionally, catalyzes the hydrolysis of the adenine ring of phosphoribosyl-AMP. In Streptococcus thermophilus (strain ATCC BAA-491 / LMD-9), this protein is Phosphoribosyl-AMP cyclohydrolase.